The primary structure comprises 495 residues: Glutamyl-tRNA(Gln) amidotransferase subunit A (495 aa).

Residues Lys75 and Ser150 each act as charge relay system in the active site. The active-site Acyl-ester intermediate is the Ser174.

The protein belongs to the amidase family. GatA subfamily. As to quaternary structure, heterotrimer of A, B and C subunits.

The catalysed reaction is L-glutamyl-tRNA(Gln) + L-glutamine + ATP + H2O = L-glutaminyl-tRNA(Gln) + L-glutamate + ADP + phosphate + H(+). In terms of biological role, allows the formation of correctly charged Gln-tRNA(Gln) through the transamidation of misacylated Glu-tRNA(Gln) in organisms which lack glutaminyl-tRNA synthetase. The reaction takes place in the presence of glutamine and ATP through an activated gamma-phospho-Glu-tRNA(Gln). The polypeptide is Glutamyl-tRNA(Gln) amidotransferase subunit A (Ralstonia nicotianae (strain ATCC BAA-1114 / GMI1000) (Ralstonia solanacearum)).